The following is a 375-amino-acid chain: Succinyl-diaminopimelate desuccinylase (375 aa).

His66 lines the Zn(2+) pocket. Residue Asp68 is part of the active site. Asp99 contacts Zn(2+). Glu133 acts as the Proton acceptor in catalysis. 3 residues coordinate Zn(2+): Glu134, Glu162, and His348.

The protein belongs to the peptidase M20A family. DapE subfamily. In terms of assembly, homodimer. It depends on Zn(2+) as a cofactor. Co(2+) serves as cofactor.

It carries out the reaction N-succinyl-(2S,6S)-2,6-diaminopimelate + H2O = (2S,6S)-2,6-diaminopimelate + succinate. Its pathway is amino-acid biosynthesis; L-lysine biosynthesis via DAP pathway; LL-2,6-diaminopimelate from (S)-tetrahydrodipicolinate (succinylase route): step 3/3. Its function is as follows. Catalyzes the hydrolysis of N-succinyl-L,L-diaminopimelic acid (SDAP), forming succinate and LL-2,6-diaminopimelate (DAP), an intermediate involved in the bacterial biosynthesis of lysine and meso-diaminopimelic acid, an essential component of bacterial cell walls. The sequence is that of Succinyl-diaminopimelate desuccinylase from Shigella sonnei (strain Ss046).